A 352-amino-acid polypeptide reads, in one-letter code: Pejvakin (352 aa).

Belongs to the gasdermin family. In terms of assembly, interacts with MAP1LC3B; interaction is direct. Interacts with IQGAP1. Interacts with ROCK2. Interacts with TRIOBP.

The protein localises to the peroxisome membrane. It localises to the cell projection. Its subcellular location is the cilium. Functionally, peroxisome-associated protein required to protect auditory hair cells against noise-induced damage. Acts by regulating noise-induced peroxisome proliferation in auditory hair cells and neurons, and promoting autophagic degradation of damaged peroxisomes (pexophagy). Noise overexposure increases reactive oxygen species (ROS) levels, causing oxidative damage to auditory hair cells and resulting in hearing loss. PJVK acts as a ROS sensor that recruits the autophagy machinery to trigger pexophagy of peroxisomes damaged by oxidative stress. In addition to pexophagy, also required to promote peroxisome proliferation in response to sound overstimulation. This is Pejvakin from Homo sapiens (Human).